The following is a 147-amino-acid chain: MGHFTEEDKATITSLWGKVNVEDVGGETLGRLLVVYPWTQRFFDSFGNLSSASAIMGNPKVKAHGKKVLTSLGGAIKNLDDLKGTFAQLSELHCDKLHVDPENFRLLGNVLVTVLAIHFGKEFTPEVQASWQKMVAGVASALSSRYH.

Residues 3–147 (HFTEEDKATI…VASALSSRYH (145 aa)) form the Globin domain. Position 13 is a phosphothreonine (Thr-13). Phosphoserine is present on residues Ser-45, Ser-51, and Ser-53. Lys-60 carries the N6-acetyllysine modification. Residue His-64 participates in heme b binding. Lys-83 bears the N6-acetyllysine mark. His-93 is a binding site for heme b. The residue at position 94 (Cys-94) is an S-nitrosocysteine. Residues Ser-140, Ser-143, and Ser-144 each carry the phosphoserine modification.

It belongs to the globin family. As to quaternary structure, heterotetramer of two alpha chains and two gamma chains in fetal hemoglobin (Hb F). In terms of tissue distribution, red blood cells.

Its function is as follows. Gamma chains make up the fetal hemoglobin F, in combination with alpha chains. This chain is Hemoglobin subunit gamma-2 (HBG2), found in Hylobates lar (Lar gibbon).